The primary structure comprises 352 residues: Ion-translocating oxidoreductase complex subunit D (352 aa).

4 consecutive transmembrane segments (helical) span residues Ile-20 to Gly-40, Gly-42 to Leu-62, Val-69 to Pro-91, and Pro-123 to Leu-143. Thr-187 is modified (FMN phosphoryl threonine). The next 5 helical transmembrane spans lie at Leu-215–Leu-235, Trp-242–Phe-262, Leu-267–Leu-287, Leu-301–Pro-321, and Asp-322–Thr-342.

It belongs to the NqrB/RnfD family. As to quaternary structure, the complex is composed of six subunits: RsxA, RsxB, RsxC, RsxD, RsxE and RsxG. FMN is required as a cofactor.

Its subcellular location is the cell inner membrane. Functionally, part of a membrane-bound complex that couples electron transfer with translocation of ions across the membrane. Required to maintain the reduced state of SoxR. This chain is Ion-translocating oxidoreductase complex subunit D, found in Salmonella choleraesuis (strain SC-B67).